Consider the following 475-residue polypeptide: ATP synthase subunit beta, chloroplastic (475 aa).

156 to 163 (GGAGVGKT) is a binding site for ATP.

This sequence belongs to the ATPase alpha/beta chains family. F-type ATPases have 2 components, CF(1) - the catalytic core - and CF(0) - the membrane proton channel. CF(1) has five subunits: alpha(3), beta(3), gamma(1), delta(1), epsilon(1). CF(0) has four main subunits: a(1), b(1), b'(1) and c(9-12).

It localises to the plastid. The protein localises to the chloroplast thylakoid membrane. It carries out the reaction ATP + H2O + 4 H(+)(in) = ADP + phosphate + 5 H(+)(out). Functionally, produces ATP from ADP in the presence of a proton gradient across the membrane. The catalytic sites are hosted primarily by the beta subunits. The chain is ATP synthase subunit beta, chloroplastic from Trieres chinensis (Marine centric diatom).